A 1521-amino-acid polypeptide reads, in one-letter code: Suppressor of Ty 6 homolog (1521 aa).

Positions 1 to 238 (MDFIDNQAEE…EEIIEDDGEG (238 aa)) are disordered. The segment covering 26 to 41 (KKMKMAKEKSKRKKKM) has biased composition (basic residues). Residues 26-42 (KKMKMAKEKSKRKKKMV) carry the Nuclear localization signal motif. Acidic residues-rich tracts occupy residues 45–56 (SDEDEDDDDDEE) and 67–76 (ADDDDEEEDA). Basic and acidic residues predominate over residues 77–89 (KSEKSEKSRHSGE). Over residues 90 to 99 (DELDDEDLDL) the composition is skewed to acidic residues. The segment covering 126–157 (PIRRPNHEDDDLLSERGSDDGDRRKDRGRGDR) has biased composition (basic and acidic residues). Acidic residues-rich tracts occupy residues 166 to 176 (RSEDDFIEDDG), 191 to 200 (NLPEGAEDDA), and 209 to 238 (FNLD…DGEG). An S1 motif domain is found at 1183-1252 (LGDSRQGGCP…ERFSLFLSCK (70 aa)). An SH2 domain is found at 1300–1389 (HPNFHNVSYE…IARFVQPMIQ (90 aa)).

It belongs to the SPT6 family. As to quaternary structure, interacts with glp-1 and lin-12. In terms of tissue distribution, abundant in embryos, and less abundant in larvae.

Its subcellular location is the nucleus. Its function is as follows. Histone H3-H4 chaperone that plays a role in maintenance of chromatin structure during RNA polymerase II transcription elongation. Required for several aspects of morphogenesis of C.elegans, including regulation of division in the germline and gut and specification of ventral-uterine precursor cell fate. The sequence is that of Suppressor of Ty 6 homolog (emb-5) from Caenorhabditis elegans.